The primary structure comprises 742 residues: Phosphatidylinositol 4-phosphate 5-kinase its3 (742 aa).

Disordered regions lie at residues 1–21 and 82–228; these read MKID…IPSY and LFKE…PDIG. 2 stretches are compositionally biased toward low complexity: residues 90 to 105 and 129 to 142; these read PSNP…SNDS and PSSN…LQNL. Composition is skewed to polar residues over residues 158–181 and 193–218; these read RSSS…SSSQ and EKNS…TSGS. In terms of domain architecture, PIPK spans 264–662; sequence GHENYVTAYN…RFYKFVESSI (399 aa). Residues 677 to 742 are disordered; sequence QDGQRVNKQQ…RNVTTNTSSS (66 aa). Residues 680–719 are compositionally biased toward polar residues; sequence QRVNKQQSVNAGNVRTNNKHGSLNNNTAPSSRNAKSTSAH.

As to quaternary structure, interacts with opy1 (via domain PH 1); the interaction is direct but opy1 does not appear to regulate its3 localization or function. Phosphorylated by casein kinase I. Phosphorylation inactivates the enzyme.

The protein resides in the cell membrane. It carries out the reaction a 1,2-diacyl-sn-glycero-3-phospho-(1D-myo-inositol 4-phosphate) + ATP = a 1,2-diacyl-sn-glycero-3-phospho-(1D-myo-inositol-4,5-bisphosphate) + ADP + H(+). Its function is as follows. Catalyzes the phosphorylation of phosphatidylinositol 4-phosphate on the fifth hydroxyl of the myo-inositol ring, to form phosphatidylinositol 4,5-bisphosphate. Involved, together with the calcineurin ppb1, in cytokinesis. The polypeptide is Phosphatidylinositol 4-phosphate 5-kinase its3 (its3) (Schizosaccharomyces pombe (strain 972 / ATCC 24843) (Fission yeast)).